The primary structure comprises 134 residues: UPF0357 protein YCL012C (134 aa).

Positions 1–23 (MKSLFYLKLLLWVVLLSLCLLMA) are cleaved as a signal peptide. Ser-71 and Ser-74 each carry phosphoserine. A Glycyl lysine isopeptide (Lys-Gly) (interchain with G-Cter in ubiquitin) cross-link involves residue Lys-86.

This sequence belongs to the UPF0357 family.

The protein is UPF0357 protein YCL012C of Saccharomyces cerevisiae (strain ATCC 204508 / S288c) (Baker's yeast).